The following is a 389-amino-acid chain: Chorismate synthase (389 aa).

Residues Arg39 and Arg45 each coordinate NADP(+). FMN contacts are provided by residues 130 to 132 (RSS), 251 to 252 (NA), Gly296, 311 to 315 (KPIPT), and Arg338.

Belongs to the chorismate synthase family. As to quaternary structure, homotetramer. Requires FMNH2 as cofactor.

The catalysed reaction is 5-O-(1-carboxyvinyl)-3-phosphoshikimate = chorismate + phosphate. It participates in metabolic intermediate biosynthesis; chorismate biosynthesis; chorismate from D-erythrose 4-phosphate and phosphoenolpyruvate: step 7/7. Catalyzes the anti-1,4-elimination of the C-3 phosphate and the C-6 proR hydrogen from 5-enolpyruvylshikimate-3-phosphate (EPSP) to yield chorismate, which is the branch point compound that serves as the starting substrate for the three terminal pathways of aromatic amino acid biosynthesis. This reaction introduces a second double bond into the aromatic ring system. The polypeptide is Chorismate synthase (Oceanobacillus iheyensis (strain DSM 14371 / CIP 107618 / JCM 11309 / KCTC 3954 / HTE831)).